A 187-amino-acid polypeptide reads, in one-letter code: Sodium/potassium ATPase inhibitor SPAI-2 (187 aa).

Residues 1–21 (MRSRSFLVLVAVFLICETLVA) form the signal peptide. Gln22 is modified (pyrrolidone carboxylic acid). Positions 22 to 126 (QRLDRIRGPK…NAQLPDKVQD (105 aa)) are excised as a propeptide. Residues 28 to 98 (RGPKGQGQDP…QDPVKAELPD (71 aa)) are disordered. 14 repeat units span residues 34–39 (GQDPVE), 40–45 (GQDQDE), 46–51 (GPGPVK), 58–63 (GQDPVK), 64–69 (GQDPVK), 70–75 (GQDPVK), 76–81 (GQDPVK), 82–87 (GQDLVK), 88–93 (SQDPVK), 100–105 (GQDVVK), 106–111 (GHEPVE), 112–117 (GQDPVN), 118–123 (AQLPDK), and 124–129 (VQDPVK). Residues 34–129 (GQDPVEGQDQ…LPDKVQDPVK (96 aa)) are 14 X 6 AA approximate tandem repeats. Residues 64-85 (GQDPVKGQDPVKGQDPVKGQDL) form an SVP-1 clotting 1 repeat. The WAP domain maps to 139–187 (LLSKRGHCPRILFRCPLSNPSNKCWRDYDCPGVKKCCEGFCGKDCLYPK). Disulfide bonds link Cys146–Cys175, Cys153–Cys179, Cys162–Cys174, and Cys168–Cys183.

In terms of processing, the short form (AA 127-187) may be an artifact due to the strongly acidic conditions of the duodenum. The pro-SPAI form may be the native form. As to expression, small intestine &gt; large intestine. The plasma contains the pro-SPAI form circulating.

Functionally, inhibits Na(+),K(+) ATPase by the competitive mode against Na(+). In Sus scrofa (Pig), this protein is Sodium/potassium ATPase inhibitor SPAI-2.